A 687-amino-acid polypeptide reads, in one-letter code: Protein 4.2 (687 aa).

Residue Gly-2 is the site of N-myristoyl glycine attachment. The band 3 binding stretch occupies residues 31–39 (LFVRRGQPF). The residue at position 247 (Ser-247) is a Phosphoserine.

The protein belongs to the transglutaminase superfamily. Transglutaminase family. In terms of assembly, component of the ankyrin-1 complex in the erythrocyte, composed of ANK1, RHCE, RHAG, SLC4A1, EPB42, GYPA, GYPB and AQP1. Interacts with SLC4A1 (via the cytoplasmic domain); this interaction is mediated by the SLC4A1 Band 3-I dimer. Interacts with ANK1 (via ANK 1-13 repeats). Interacts with AQP1 (via the C-terminal).

It localises to the cell membrane. The protein localises to the cytoplasm. Its subcellular location is the cytoskeleton. Component of the ankyrin-1 complex, a multiprotein complex involved in the stability and shape of the erythrocyte membrane. This is Protein 4.2 from Bos taurus (Bovine).